Here is a 128-residue protein sequence, read N- to C-terminus: Large ribosomal subunit protein bL12 (128 aa).

This sequence belongs to the bacterial ribosomal protein bL12 family. In terms of assembly, homodimer. Part of the ribosomal stalk of the 50S ribosomal subunit. Forms a multimeric L10(L12)X complex, where L10 forms an elongated spine to which 2 to 4 L12 dimers bind in a sequential fashion. Binds GTP-bound translation factors.

In terms of biological role, forms part of the ribosomal stalk which helps the ribosome interact with GTP-bound translation factors. Is thus essential for accurate translation. The chain is Large ribosomal subunit protein bL12 from Synechocystis sp. (strain ATCC 27184 / PCC 6803 / Kazusa).